The sequence spans 337 residues: Cysteine proteinase 3 (337 aa).

The signal sequence occupies residues methionine 1–alanine 21. The propeptide at glycine 22–lysine 120 is activation peptide. Disulfide bonds link cysteine 142–cysteine 185, cysteine 176–cysteine 219, and cysteine 277–cysteine 326. Cysteine 145 is an active-site residue. Active-site residues include histidine 284 and asparagine 304.

The protein belongs to the peptidase C1 family.

It is found in the lysosome. This Dictyostelium discoideum (Social amoeba) protein is Cysteine proteinase 3 (cprC).